Consider the following 959-residue polypeptide: Glycine dehydrogenase (decarboxylating) (959 aa).

Lys-708 carries the post-translational modification N6-(pyridoxal phosphate)lysine.

The protein belongs to the GcvP family. In terms of assembly, the glycine cleavage system is composed of four proteins: P, T, L and H. It depends on pyridoxal 5'-phosphate as a cofactor.

It carries out the reaction N(6)-[(R)-lipoyl]-L-lysyl-[glycine-cleavage complex H protein] + glycine + H(+) = N(6)-[(R)-S(8)-aminomethyldihydrolipoyl]-L-lysyl-[glycine-cleavage complex H protein] + CO2. Functionally, the glycine cleavage system catalyzes the degradation of glycine. The P protein binds the alpha-amino group of glycine through its pyridoxal phosphate cofactor; CO(2) is released and the remaining methylamine moiety is then transferred to the lipoamide cofactor of the H protein. This is Glycine dehydrogenase (decarboxylating) from Yersinia enterocolitica serotype O:8 / biotype 1B (strain NCTC 13174 / 8081).